Here is a 558-residue protein sequence, read N- to C-terminus: MPDAARKYQPYPTVGLTDRTWPNKVIDKAPIWCSVDLRDGNQALIDPMGHERKARMFGLLLDMGFKEIEIGFPSASQTDFDFARWCIEEGNVPADVSLQVLVQCRPELITRTFEALKGATNPIVHFYNSTSELQRRVVFEKDVGGIKRIATDAAKMITDMAAKAGGGYRFEYSPESFTGTELEVALEICNAVTEIVRPKPDNKLIINLPSTVEMSTPNIYADRIEWMCRNLDNRENLIISLHPHNDRGTGIATTELGLMAGADRVEGTLFGNGERTGNVDIVTLALNMYTQGVDPGIDCSDINRMKDVYEYSNQLKIPERHPYVGELVYTAFSGSHQDAINKGMKALKKANTSLWEVPYLPIDPADVGRSYEAIIRINSQSGKGGIAYVLQADYGLNLPRNLQIEFSQAIQAITDAEGKEVPAKRIHERFLETYVDQPGARLKFLDHHTYPDTAVKGRRVIEAVILDKGKEVTISGTGTGPIDGFVDALSRHVGVEMSVLDYSEHSMQRGSNASAISYVEMEYPGGKLFGAGINTNIVAASLEAVTSAANRIVGRKAR.

The Pyruvate carboxyltransferase domain maps to 30 to 303 (PIWCSVDLRD…DPGIDCSDIN (274 aa)). Residues Asp39, His242, His244, and Asn278 each contribute to the Mg(2+) site. Positions 437–558 (QPGARLKFLD…ANRIVGRKAR (122 aa)) are regulatory domain.

The protein belongs to the alpha-IPM synthase/homocitrate synthase family. LeuA type 2 subfamily. Homodimer. It depends on Mg(2+) as a cofactor.

It localises to the cytoplasm. The enzyme catalyses 3-methyl-2-oxobutanoate + acetyl-CoA + H2O = (2S)-2-isopropylmalate + CoA + H(+). Its pathway is amino-acid biosynthesis; L-leucine biosynthesis; L-leucine from 3-methyl-2-oxobutanoate: step 1/4. Catalyzes the condensation of the acetyl group of acetyl-CoA with 3-methyl-2-oxobutanoate (2-ketoisovalerate) to form 3-carboxy-3-hydroxy-4-methylpentanoate (2-isopropylmalate). In Mesorhizobium japonicum (strain LMG 29417 / CECT 9101 / MAFF 303099) (Mesorhizobium loti (strain MAFF 303099)), this protein is 2-isopropylmalate synthase.